The chain runs to 438 residues: Dihydrolipoyllysine-residue acetyltransferase component of pyruvate dehydrogenase complex (438 aa).

Residues 1-76 (MFKVKFADIG…KVGDVVMEIE (76 aa)) enclose the Lipoyl-binding domain. The residue at position 42 (Lys-42) is an N6-lipoyllysine. Residues 132-169 (KATPLARKVAADLNIDLSLVTPTGPNQRILVADIKNHQ) form the Peripheral subunit-binding (PSBD) domain. The segment covering 172 to 181 (STQLASQPIS) has biased composition (polar residues). The segment at 172-192 (STQLASQPISQPAPTPSPSAH) is disordered. The active site involves His-411.

The protein belongs to the 2-oxoacid dehydrogenase family. In terms of assembly, forms a 24-polypeptide structural core with octahedral symmetry. It depends on (R)-lipoate as a cofactor.

It carries out the reaction N(6)-[(R)-dihydrolipoyl]-L-lysyl-[protein] + acetyl-CoA = N(6)-[(R)-S(8)-acetyldihydrolipoyl]-L-lysyl-[protein] + CoA. Functionally, the pyruvate dehydrogenase complex catalyzes the overall conversion of pyruvate to acetyl-CoA and CO(2). It contains multiple copies of three enzymatic components: pyruvate dehydrogenase (E1), dihydrolipoamide acetyltransferase (E2) and lipoamide dehydrogenase (E3). This Mycoplasma capricolum subsp. capricolum (strain California kid / ATCC 27343 / NCTC 10154) protein is Dihydrolipoyllysine-residue acetyltransferase component of pyruvate dehydrogenase complex (pdhC).